A 360-amino-acid chain; its full sequence is Arginase, non-hepatic 3 (360 aa).

The Mn(2+) site is built by H122, D145, H147, and D149. Residues 147–151 (HADIN), 158–160 (SGN), and D204 contribute to the substrate site. Mn(2+) is bound by residues D253 and D255. Residues T267 and E298 each contribute to the substrate site.

The protein belongs to the arginase family. In terms of assembly, homotrimer. Mn(2+) serves as cofactor. In terms of tissue distribution, expressed at differing tadpole stages in tail, intestine, hindlimb and trunk region. Strongest in tadpole tail.

It carries out the reaction L-arginine + H2O = urea + L-ornithine. The protein operates within nitrogen metabolism; urea cycle; L-ornithine and urea from L-arginine: step 1/1. As well as its role in the urea cycle, may be involved in tissue remodeling. In Xenopus laevis (African clawed frog), this protein is Arginase, non-hepatic 3 (arg2-c).